A 622-amino-acid polypeptide reads, in one-letter code: Palmitoyl-protein thioesterase-dolichyl pyrophosphate phosphatase fusion 1 (622 aa).

Positions methionine 1–alanine 24 are cleaved as a signal peptide. Over isoleucine 25–serine 405 the chain is Lumenal. A disulfide bridge connects residues cysteine 106 and cysteine 138. Residue serine 125 is part of the active site. The N-linked (GlcNAc...) asparagine glycan is linked to asparagine 223. The active site involves aspartate 245. Asparagine 260 carries an N-linked (GlcNAc...) asparagine glycan. The active site involves histidine 298. An N-linked (GlcNAc...) asparagine glycan is attached at asparagine 396. A helical membrane pass occupies residues phenylalanine 406–tryptophan 426. The Cytoplasmic portion of the chain corresponds to arginine 427–serine 428. The chain crosses the membrane as a helical span at residues threonine 429–phenylalanine 449. The Lumenal segment spans residues threonine 450–glycine 488. The chain crosses the membrane as a helical span at residues valine 489 to tryptophan 511. Over aspartate 512–glutamine 519 the chain is Cytoplasmic. The helical transmembrane segment at cysteine 520–cysteine 540 threads the bilayer. The Lumenal portion of the chain corresponds to serine 541–threonine 552. The chain crosses the membrane as a helical span at residues glutamine 553 to glycine 573. Topologically, residues lysine 574–asparagine 622 are cytoplasmic.

This sequence in the N-terminal section; belongs to the palmitoyl-protein thioesterase family. In the C-terminal section; belongs to the dolichyldiphosphatase family. In terms of processing, proteolytically cleaved, possibly by krp1.

It localises to the vacuole. It is found in the endoplasmic reticulum membrane. The enzyme catalyses S-hexadecanoyl-L-cysteinyl-[protein] + H2O = L-cysteinyl-[protein] + hexadecanoate + H(+). It catalyses the reaction a di-trans,poly-cis-dolichyl diphosphate + H2O = a di-trans,poly-cis-dolichyl phosphate + phosphate + H(+). Its function is as follows. Essential protein. Removes thioester-linked fatty acyl groups such as palmitate from modified cysteine residues in proteins or peptides during vacuolar degradation. Required for efficient N-glycosylation. Necessary for maintaining optimal levels of dolichol-linked oligosaccharides. The polypeptide is Palmitoyl-protein thioesterase-dolichyl pyrophosphate phosphatase fusion 1 (pdf1) (Schizosaccharomyces pombe (strain 972 / ATCC 24843) (Fission yeast)).